The primary structure comprises 126 residues: Aspartate 1-decarboxylase (126 aa).

Serine 25 functions as the Schiff-base intermediate with substrate; via pyruvic acid in the catalytic mechanism. Serine 25 bears the Pyruvic acid (Ser) mark. Substrate is bound at residue threonine 57. The active-site Proton donor is tyrosine 58. 73–75 (GAA) is a binding site for substrate.

The protein belongs to the PanD family. Heterooctamer of four alpha and four beta subunits. Requires pyruvate as cofactor. Is synthesized initially as an inactive proenzyme, which is activated by self-cleavage at a specific serine bond to produce a beta-subunit with a hydroxyl group at its C-terminus and an alpha-subunit with a pyruvoyl group at its N-terminus.

The protein localises to the cytoplasm. The catalysed reaction is L-aspartate + H(+) = beta-alanine + CO2. It functions in the pathway cofactor biosynthesis; (R)-pantothenate biosynthesis; beta-alanine from L-aspartate: step 1/1. In terms of biological role, catalyzes the pyruvoyl-dependent decarboxylation of aspartate to produce beta-alanine. In Stutzerimonas stutzeri (strain A1501) (Pseudomonas stutzeri), this protein is Aspartate 1-decarboxylase.